The chain runs to 301 residues: uncharacterized protein (301 aa).

The next 9 helical transmembrane spans lie at 1-21 (MSWIIFYTVIAALLVLDLGIV), 33-53 (SVLFSLFYFVIACLFGIYFYY), 72-92 (AMSLDNIFVISIIFQFFKIPG), 101-121 (FGIIGVIIFRAIMIYGGTILI), 124-144 (FAWLLYIFAVILIATGIKTFY), 185-205 (YFTPLFISLVLIEAIDLVFAI), 220-240 (IIYTSNIFAILGLRALFFCLA), 246-266 (FSYIKYSLALILIFIGFKIFI), and 270-290 (IAIPAYVSLIVTITLLLFGII).

Belongs to the TerC family.

The protein localises to the cell membrane. This is an uncharacterized protein from Rickettsia felis (strain ATCC VR-1525 / URRWXCal2) (Rickettsia azadi).